Reading from the N-terminus, the 119-residue chain is Large ribosomal subunit protein uL18 (119 aa).

The protein belongs to the universal ribosomal protein uL18 family. Part of the 50S ribosomal subunit; part of the 5S rRNA/L5/L18/L25 subcomplex. Contacts the 5S and 23S rRNAs.

Its function is as follows. This is one of the proteins that bind and probably mediate the attachment of the 5S RNA into the large ribosomal subunit, where it forms part of the central protuberance. The polypeptide is Large ribosomal subunit protein uL18 (Clostridium botulinum (strain Alaska E43 / Type E3)).